The following is a 499-amino-acid chain: Probable cytosol aminopeptidase (499 aa).

Mn(2+)-binding residues include lysine 263 and aspartate 268. Lysine 275 is a catalytic residue. Mn(2+) is bound by residues aspartate 286, aspartate 345, and glutamate 347. The active site involves arginine 349.

It belongs to the peptidase M17 family. Mn(2+) serves as cofactor.

Its subcellular location is the cytoplasm. The catalysed reaction is Release of an N-terminal amino acid, Xaa-|-Yaa-, in which Xaa is preferably Leu, but may be other amino acids including Pro although not Arg or Lys, and Yaa may be Pro. Amino acid amides and methyl esters are also readily hydrolyzed, but rates on arylamides are exceedingly low.. The enzyme catalyses Release of an N-terminal amino acid, preferentially leucine, but not glutamic or aspartic acids.. Functionally, presumably involved in the processing and regular turnover of intracellular proteins. Catalyzes the removal of unsubstituted N-terminal amino acids from various peptides. In Chlamydia muridarum (strain MoPn / Nigg), this protein is Probable cytosol aminopeptidase (pepA).